We begin with the raw amino-acid sequence, 378 residues long: MTKPAILALADGSIFRGEAIGADGQTVGEVVFNTAMTGYQEILTDPSYAQQIVTLTYPHIGNTGTTPEDAESDRVWSAGLVIRDLPLVASNWRNKMSLGDYLKANNVVAIAGIDTRRLTRILREKGAQNGCIMAGDNISEEAAIAAARGFPGLKGMDLAKEVSTKDTYEWRHSVWNLQTDSHPEIAASELPYHVVAYDYGVKVNILRMLVERGCRVTVVPAQTPASEVLAYKPDGVFLSNGPGDPEPCDYAIKAIKQVLETEVPVFGICLGHQLLALAAGAKTVKMGHGHHGANHPVQDLDTGVVMITSQNHGFAVDESTLPGNVRAIHKSLFDGTLQGIELTDKSAFSFQGHPEASPGPNDVAPLFDRFIDAMAKRR.

Positions 1-189 (MTKPAILALA…DSHPEIAASE (189 aa)) are CPSase. S47, G241, and G243 together coordinate L-glutamine. The Glutamine amidotransferase type-1 domain maps to 193–378 (HVVAYDYGVK…RFIDAMAKRR (186 aa)). C269 serves as the catalytic Nucleophile. Residues L270, Q273, N311, G313, and F314 each coordinate L-glutamine. Residues H353 and E355 contribute to the active site.

It belongs to the CarA family. In terms of assembly, composed of two chains; the small (or glutamine) chain promotes the hydrolysis of glutamine to ammonia, which is used by the large (or ammonia) chain to synthesize carbamoyl phosphate. Tetramer of heterodimers (alpha,beta)4.

The catalysed reaction is hydrogencarbonate + L-glutamine + 2 ATP + H2O = carbamoyl phosphate + L-glutamate + 2 ADP + phosphate + 2 H(+). It catalyses the reaction L-glutamine + H2O = L-glutamate + NH4(+). Its pathway is amino-acid biosynthesis; L-arginine biosynthesis; carbamoyl phosphate from bicarbonate: step 1/1. The protein operates within pyrimidine metabolism; UMP biosynthesis via de novo pathway; (S)-dihydroorotate from bicarbonate: step 1/3. Its function is as follows. Small subunit of the glutamine-dependent carbamoyl phosphate synthetase (CPSase). CPSase catalyzes the formation of carbamoyl phosphate from the ammonia moiety of glutamine, carbonate, and phosphate donated by ATP, constituting the first step of 2 biosynthetic pathways, one leading to arginine and/or urea and the other to pyrimidine nucleotides. The small subunit (glutamine amidotransferase) binds and cleaves glutamine to supply the large subunit with the substrate ammonia. The protein is Carbamoyl phosphate synthase small chain of Pseudomonas syringae pv. tomato (strain ATCC BAA-871 / DC3000).